A 166-amino-acid chain; its full sequence is Large ribosomal subunit protein uL11 (166 aa).

The protein belongs to the universal ribosomal protein uL11 family. Part of the ribosomal stalk of the 50S ribosomal subunit. Interacts with L10 and the large rRNA to form the base of the stalk. L10 forms an elongated spine to which L12 dimers bind in a sequential fashion forming a multimeric L10(L12)X complex.

Its function is as follows. Forms part of the ribosomal stalk which helps the ribosome interact with GTP-bound translation factors. This Methanopyrus kandleri (strain AV19 / DSM 6324 / JCM 9639 / NBRC 100938) protein is Large ribosomal subunit protein uL11.